Reading from the N-terminus, the 206-residue chain is Ras-related protein Ral-B (206 aa).

21-29 (GSGGVGKSA) is a binding site for GTP. The Effector region motif lies at 43–51 (YEPTKADSY). GTP is bound by residues 68 to 72 (DTAGQ), 128 to 131 (NKSD), and 158 to 160 (SAK). The interval 181 to 206 (MSENKDKNGRKSSKSKKSFKERCCLL) is disordered. The residue at position 203 (C203) is a Cysteine methyl ester. The S-geranylgeranyl cysteine moiety is linked to residue C203. Positions 204–206 (CLL) are cleaved as a propeptide — removed in mature form.

Belongs to the small GTPase superfamily. Ras family. Interacts with EXOC2/Sec5 and EXOC8/Exo84. Interacts (via effector domain) with RALBP1. In terms of processing, prenylation is essential for membrane localization. Post-translationally, the farnesylated form confers resistance to the proapoptotic and anti-anchorage-dependent growth effects of some geranylgeranyltransferase I inhibitors.

It is found in the cell membrane. Its subcellular location is the midbody. It catalyses the reaction GTP + H2O = GDP + phosphate + H(+). Alternates between an inactive form bound to GDP and an active form bound to GTP. Activated by a guanine nucleotide-exchange factor (GEF) and inactivated by a GTPase-activating protein (GAP). In terms of biological role, multifunctional GTPase involved in a variety of cellular processes including gene expression, cell migration, cell proliferation, oncogenic transformation and membrane trafficking. Accomplishes its multiple functions by interacting with distinct downstream effectors. Acts as a GTP sensor for GTP-dependent exocytosis of dense core vesicles. Required both to stabilize the assembly of the exocyst complex and to localize functional exocyst complexes to the leading edge of migrating cells. Required for suppression of apoptosis. In late stages of cytokinesis, upon completion of the bridge formation between dividing cells, mediates exocyst recruitment to the midbody to drive abscission. Involved in ligand-dependent receptor mediated endocytosis of the EGF and insulin receptors. The sequence is that of Ras-related protein Ral-B (Ralb) from Mus musculus (Mouse).